Consider the following 202-residue polypeptide: Small ribosomal subunit protein uS4c (202 aa).

Positions 90–153 (MRLDNIIFRL…KSQAIISKNL (64 aa)) constitute an S4 RNA-binding domain.

It belongs to the universal ribosomal protein uS4 family. As to quaternary structure, part of the 30S ribosomal subunit. Contacts protein S5. The interaction surface between S4 and S5 is involved in control of translational fidelity.

The protein localises to the plastid. It localises to the chloroplast. One of the primary rRNA binding proteins, it binds directly to 16S rRNA where it nucleates assembly of the body of the 30S subunit. In terms of biological role, with S5 and S12 plays an important role in translational accuracy. The chain is Small ribosomal subunit protein uS4c (rps4) from Rosulabryum capillare (Capillary thread-moss).